A 337-amino-acid polypeptide reads, in one-letter code: tRNA N6-adenosine threonylcarbamoyltransferase (337 aa).

The Fe cation site is built by His-111 and His-115. Substrate contacts are provided by residues 134 to 138 (LVSGG), Asp-167, Gly-180, and Asn-272. Asp-300 contributes to the Fe cation binding site.

Belongs to the KAE1 / TsaD family. Requires Fe(2+) as cofactor.

It is found in the cytoplasm. The catalysed reaction is L-threonylcarbamoyladenylate + adenosine(37) in tRNA = N(6)-L-threonylcarbamoyladenosine(37) in tRNA + AMP + H(+). In terms of biological role, required for the formation of a threonylcarbamoyl group on adenosine at position 37 (t(6)A37) in tRNAs that read codons beginning with adenine. Is involved in the transfer of the threonylcarbamoyl moiety of threonylcarbamoyl-AMP (TC-AMP) to the N6 group of A37, together with TsaE and TsaB. TsaD likely plays a direct catalytic role in this reaction. The polypeptide is tRNA N6-adenosine threonylcarbamoyltransferase (Pseudoalteromonas translucida (strain TAC 125)).